The following is a 101-amino-acid chain: Small ribosomal subunit protein uS14 (101 aa).

This sequence belongs to the universal ribosomal protein uS14 family. As to quaternary structure, part of the 30S ribosomal subunit. Contacts proteins S3 and S10.

Its function is as follows. Binds 16S rRNA, required for the assembly of 30S particles and may also be responsible for determining the conformation of the 16S rRNA at the A site. The protein is Small ribosomal subunit protein uS14 of Albidiferax ferrireducens (strain ATCC BAA-621 / DSM 15236 / T118) (Rhodoferax ferrireducens).